Consider the following 185-residue polypeptide: Large ribosomal subunit protein uL22 (185 aa).

Residues 158–185 (AKPREDEPHKKKISKKKLARAKEKMLRE) form a disordered region. The span at 167-176 (KKKISKKKLA) shows a compositional bias: basic residues.

This sequence belongs to the universal ribosomal protein uL22 family.

The chain is Large ribosomal subunit protein uL22 (RpL17) from Diaphorina citri (Asian citrus psyllid).